The primary structure comprises 469 residues: MTVAQQAPSALNFDCETGNYHTFCPISCVSWLYQKIEDSFFLVIGTKTCGYFLQNAMGVMIFAEPRYAMAELEEGDISAQLKDYEELKRLCLQIKRDRNPSVIVWIGTCTTEIIKMDLEGLAPQLEAEIGIPIVTARANGLDYAFTQGEDTVLASMAHKCPTSAQVQGEDKEERNAIQKLLTFGRKADQEKVESEYVDHQPLVLFGSLPDPVVTNLTLELKKQGVKVSGWLPAKRYTELPVIDEGYYVAGVNPFLSRTATTLMRRRKCKLIGAPFPIGPDGTRAWIEKICSVLGIEPQGLEEREAQIWASLEDYIQLIRGKSVFFMGDNLLEVSLARFLIRCGMTCPEIGIPYMDKRYQAAELALLEKTCSDMGVPLPNIVEKPDNYNQIQRIKALQPDLVITGMAHANPLEAQGINTKWSVEFTFAQIHGFTNARDILELATRPLRRNSQLGELGWDKLIAKDVPAQV.

[4Fe-4S] cluster is bound by residues cysteine 24, cysteine 49, and cysteine 109.

Belongs to the BchN/ChlN family. Protochlorophyllide reductase is composed of three subunits; ChlL, ChlN and ChlB. Forms a heterotetramer of two ChlB and two ChlN subunits. [4Fe-4S] cluster is required as a cofactor.

The enzyme catalyses chlorophyllide a + oxidized 2[4Fe-4S]-[ferredoxin] + 2 ADP + 2 phosphate = protochlorophyllide a + reduced 2[4Fe-4S]-[ferredoxin] + 2 ATP + 2 H2O. It functions in the pathway porphyrin-containing compound metabolism; chlorophyll biosynthesis (light-independent). In terms of biological role, component of the dark-operative protochlorophyllide reductase (DPOR) that uses Mg-ATP and reduced ferredoxin to reduce ring D of protochlorophyllide (Pchlide) to form chlorophyllide a (Chlide). This reaction is light-independent. The NB-protein (ChlN-ChlB) is the catalytic component of the complex. The polypeptide is Light-independent protochlorophyllide reductase subunit N (Synechocystis sp. (strain ATCC 27184 / PCC 6803 / Kazusa)).